A 137-amino-acid polypeptide reads, in one-letter code: Basic phospholipase A2 2 (137 aa).

Positions 1-11 (LVAVCVSLLGA) are cleaved as a signal peptide. A propeptide spanning residues 12-19 (ANIPPQPL) is cleaved from the precursor. Disulfide bonds link cysteine 30–cysteine 89, cysteine 44–cysteine 136, cysteine 46–cysteine 62, cysteine 61–cysteine 117, cysteine 68–cysteine 110, cysteine 78–cysteine 103, and cysteine 96–cysteine 108. Ca(2+)-binding residues include tyrosine 45 and glycine 47. Tyrosine 48 lines the alpha-D-mannopyranose pocket. Glycine 49 contacts Ca(2+). Histidine 65 is an active-site residue. Ca(2+) is bound at residue aspartate 66. Aspartate 66 is an alpha-D-mannopyranose binding site. Residue aspartate 111 is part of the active site.

This sequence belongs to the phospholipase A2 family. Group I subfamily. D49 sub-subfamily. In terms of assembly, homodimer; non-covalently linked. The cofactor is Ca(2+). In terms of processing, homodimerization and interaction of the catalytically important Asp-49 (here Asp-111) with mannose molecules may render this protein inactive. In terms of tissue distribution, expressed by the venom gland.

The protein localises to the secreted. It carries out the reaction a 1,2-diacyl-sn-glycero-3-phosphocholine + H2O = a 1-acyl-sn-glycero-3-phosphocholine + a fatty acid + H(+). In terms of biological role, snake venom phospholipase A2 (PLA2) that shows anticoagulant and neurotoxic activities. Its function is as follows. PLA2 catalyzes the calcium-dependent hydrolysis of the 2-acyl groups in 3-sn-phosphoglycerides. This is Basic phospholipase A2 2 from Bungarus caeruleus (Indian krait).